The chain runs to 724 residues: Phosphoribosylformylglycinamidine synthase subunit PurL (724 aa).

Residue histidine 34 is part of the active site. ATP is bound at residue tyrosine 37. A Mg(2+)-binding site is contributed by glutamate 78. Residues 79–82 and arginine 101 contribute to the substrate site; that span reads SHNH. The Proton acceptor role is filled by histidine 80. Residue aspartate 102 coordinates Mg(2+). Glutamine 226 contacts substrate. Residue aspartate 254 participates in Mg(2+) binding. 298–300 serves as a coordination point for substrate; that stretch reads ESQ. 2 residues coordinate ATP: aspartate 480 and glycine 517. Asparagine 518 is a binding site for Mg(2+). Position 520 (serine 520) interacts with substrate.

The protein belongs to the FGAMS family. As to quaternary structure, monomer. Part of the FGAM synthase complex composed of 1 PurL, 1 PurQ and 2 PurS subunits.

The protein localises to the cytoplasm. It catalyses the reaction N(2)-formyl-N(1)-(5-phospho-beta-D-ribosyl)glycinamide + L-glutamine + ATP + H2O = 2-formamido-N(1)-(5-O-phospho-beta-D-ribosyl)acetamidine + L-glutamate + ADP + phosphate + H(+). It functions in the pathway purine metabolism; IMP biosynthesis via de novo pathway; 5-amino-1-(5-phospho-D-ribosyl)imidazole from N(2)-formyl-N(1)-(5-phospho-D-ribosyl)glycinamide: step 1/2. In terms of biological role, part of the phosphoribosylformylglycinamidine synthase complex involved in the purines biosynthetic pathway. Catalyzes the ATP-dependent conversion of formylglycinamide ribonucleotide (FGAR) and glutamine to yield formylglycinamidine ribonucleotide (FGAM) and glutamate. The FGAM synthase complex is composed of three subunits. PurQ produces an ammonia molecule by converting glutamine to glutamate. PurL transfers the ammonia molecule to FGAR to form FGAM in an ATP-dependent manner. PurS interacts with PurQ and PurL and is thought to assist in the transfer of the ammonia molecule from PurQ to PurL. The sequence is that of Phosphoribosylformylglycinamidine synthase subunit PurL from Methanopyrus kandleri (strain AV19 / DSM 6324 / JCM 9639 / NBRC 100938).